We begin with the raw amino-acid sequence, 87 residues long: Cell division topological specificity factor (87 aa).

The protein belongs to the MinE family.

Functionally, prevents the cell division inhibition by proteins MinC and MinD at internal division sites while permitting inhibition at polar sites. This ensures cell division at the proper site by restricting the formation of a division septum at the midpoint of the long axis of the cell. The chain is Cell division topological specificity factor from Blochmanniella pennsylvanica (strain BPEN).